Reading from the N-terminus, the 247-residue chain is Ubiquinone biosynthesis O-methyltransferase (247 aa).

The S-adenosyl-L-methionine site is built by R40, G71, D92, and M135.

It belongs to the methyltransferase superfamily. UbiG/COQ3 family.

The catalysed reaction is a 3-demethylubiquinol + S-adenosyl-L-methionine = a ubiquinol + S-adenosyl-L-homocysteine + H(+). The enzyme catalyses a 3-(all-trans-polyprenyl)benzene-1,2-diol + S-adenosyl-L-methionine = a 2-methoxy-6-(all-trans-polyprenyl)phenol + S-adenosyl-L-homocysteine + H(+). The protein operates within cofactor biosynthesis; ubiquinone biosynthesis. O-methyltransferase that catalyzes the 2 O-methylation steps in the ubiquinone biosynthetic pathway. The protein is Ubiquinone biosynthesis O-methyltransferase of Ruegeria sp. (strain TM1040) (Silicibacter sp.).